The following is a 1340-amino-acid chain: Thioester-containing protein 1 allele S1 (1340 aa).

Positions 1–21 are cleaved as a signal peptide; the sequence is MWQFIRSRILTVIIFIGAAHG. Residues Asn-68, Asn-199, Asn-242, Asn-312, and Asn-481 are each glycosylated (N-linked (GlcNAc...) asparagine). A may contain the cleavage site region spans residues 580-609; it reads ENEFDIFHSLGLFARTLDDILFDSANEKTG. 4 N-linked (GlcNAc...) asparagine glycosylation sites follow: Asn-637, Asn-728, Asn-813, and Asn-828. The isoglutamyl cysteine thioester (Cys-Gln) cross-link spans 859–862; it reads CGEQ. Disulfide bonds link Cys-1217–Cys-1283, Cys-1326–Cys-1338, and Cys-1329–Cys-1334.

In terms of assembly, heterodimer of a TEP1-N chain and an TEP1-C chain non-covalently linked. Forms a complex composed of TEP1-N and TEP1-C heterodimer, LRIM1 and APL1C; the interaction stabilizes TEP1-N and TEP1-C heterodimer, prevents its binding to tissues while circulating in the hemolymph and protects the thioester bond from hydrolysis. Mature TEP1 and to a lesser extent full-length TEP1 interact with SPCLIP1; the interaction is induced by microbial infection. In the hemolymph, the full-length protein is cleaved by an unknow protease into a 75kDa N-terminal (TEP1-N) chain and an 80kDa C-terminal (TEP1-C) chain which remain non-covalently linked. The TEP1-C chain contains the thioester bond which covalently binds to the pathogen surface. Cleavage is induced by bacterial infection or aseptic wound injury. During embryonic and pupal development, the cleaved form is the predominant form. In terms of processing, N-glycosylated. Specifically expressed in hemocytes (at protein level).

It localises to the secreted. Its function is as follows. Plays an essential role in the innate immune response to bacteria and protozoa infection. After proteolytic cleavage, the protein C-terminus binds covalently through a thioester bond to the pathogen surface resulting in pathogen clearance either by melanization or lysis. Initiate the recruitment and activation of a cascade of proteases, mostly of CLIP-domain serine proteases, which leads to the proteolytic cleavage of the prophenoloxidase (PPO) into active phenoloxidase (PO), the rate-limiting enzyme in melanin biosynthesis. In response to parasite P.berghei-mediated infection, binds to and mediates killing of ookinetes, as they egress from midgut epithelial cells into the basal labyrinth, by both lysis and melanization. During bacterial infection, binds to both Gram-positive and Gram-negative bacteria but only promotes phagocytosis of Gram-negative bacteria. Promotes the accumulation of SPCLIP1 onto the surface of P.berghei ookinetes and bacterium E.coli which leads to the melanization of the pathogen. Recruits CLIPA2 to bacteria surface. In response to bacterial infection, required for periostial hemocyte aggregation, but not for the aggregation of sessile hemocytes in non-periostial regions. During the late stage of fungus B.bassiana-mediated infection, required for the initiation of hyphae melanization by binding to the surface of hyphae and recruiting prophenoloxidase PPO to them. Plays a role in male fertility by binding to defective sperm cells and promoting their removal during spermatogenesis. Functionally, binds covalently through a thioester bond to the pathogen surface resulting in pathogen clearance. The protein is Thioester-containing protein 1 allele S1 of Anopheles gambiae (African malaria mosquito).